We begin with the raw amino-acid sequence, 216 residues long: Ceramide-1-phosphate transfer protein (216 aa).

An N-acylsphingoid base 1-phosphate-binding residues include D56, K60, R108, R112, and H152.

It belongs to the GLTP family.

Its subcellular location is the cytoplasm. It localises to the cytosol. The protein localises to the golgi apparatus. It is found in the trans-Golgi network membrane. The protein resides in the cell membrane. Its subcellular location is the endosome membrane. It localises to the nucleus outer membrane. The catalysed reaction is N-(hexadecanoyl)-sphing-4-enine-1-phosphate(in) = N-(hexadecanoyl)-sphing-4-enine-1-phosphate(out). It catalyses the reaction N-(9Z-octadecenoyl)-sphing-4-enine-1-phosphate(in) = N-(9Z-octadecenoyl)-sphing-4-enine-1-phosphate(out). In terms of biological role, mediates the intracellular transfer of ceramide-1-phosphate (C1P) between organelle membranes and the cell membrane. Required for normal structure of the Golgi stacks. Can bind phosphoceramides with a variety of aliphatic chains, but has a preference for lipids with saturated C16:0 or monounsaturated C18:1 aliphatic chains, and is inefficient with phosphoceramides containing lignoceryl (C24:0). Plays a role in the regulation of the cellular levels of ceramide-1-phosphate, and thereby contributes to the regulation of phospholipase PLA2G4A activity and the release of arachidonic acid. Has no activity with galactosylceramide, lactosylceramide, sphingomyelin, phosphatidylcholine, phosphatidic acid and ceramide. C1P transfer is stimulated by phosphatidylserine in C1P source vesicles. Regulates autophagy, inflammasome mediated IL1B and IL18 processing, and pyroptosis, but not apoptosis. The polypeptide is Ceramide-1-phosphate transfer protein (Cptp) (Rattus norvegicus (Rat)).